The sequence spans 235 residues: Small ribosomal subunit protein eS4 (235 aa).

Residues 37-110 (LPLGLIIRDV…KGRLVLYKLN (74 aa)) form the S4 RNA-binding domain.

Belongs to the eukaryotic ribosomal protein eS4 family.

The chain is Small ribosomal subunit protein eS4 from Methanosarcina mazei (strain ATCC BAA-159 / DSM 3647 / Goe1 / Go1 / JCM 11833 / OCM 88) (Methanosarcina frisia).